A 1084-amino-acid chain; its full sequence is Autophagy-related protein 11 (1084 aa).

Coiled-coil stretches lie at residues 585-739 (VQNL…LTES) and 847-879 (VIRR…TNDK). Disordered stretches follow at residues 925 to 961 (SMIP…NMNR) and 973 to 1007 (NIGS…STNA). Low complexity-rich tracts occupy residues 940-949 (SNTNNSNPSS) and 973-993 (NIGS…NGNN). Positions 994 to 1007 (KPETNIDTTSSTNA) are enriched in polar residues.

Belongs to the ATG11 family. Homodimer and potential homooligomers. Interacts with ATG1 kinase and the ATG19 and ATG34 cargo protein transporters. Interacts with ATG9, ATG17 and ATG20.

The protein localises to the preautophagosomal structure membrane. It localises to the vacuole membrane. Its function is as follows. Involved in cytoplasm to vacuole transport (Cvt), pexophagy, mitophagy and nucleophagy. Recruits mitochondria for their selective degradation via autophagy (mitophagy) during starvation, through its interaction with ATG32. Works as scaffold proteins that recruit ATG proteins to the pre-autophagosome (PAS), the site of vesicle/autophagosome formation. Required for ATG9 anterograde transport from the mitochondria to the PAS. Also recruits the ATG19-prAPE1 complex to the PAS. Required for the Cvt vesicles completion. In Kluyveromyces marxianus (strain DMKU3-1042 / BCC 29191 / NBRC 104275) (Yeast), this protein is Autophagy-related protein 11.